Reading from the N-terminus, the 430-residue chain is Agropine synthesis reductase (430 aa).

An NAD(+)-binding site is contributed by 203–227; it reads LVSGSNRGVGKAIAEDLIAHGYRLS. Residue Ser-333 coordinates substrate. The active-site Proton acceptor is the Tyr-346.

Belongs to the short-chain dehydrogenases/reductases (SDR) family.

It functions in the pathway opine metabolism; mannopine biosynthesis. Reduces deoxy-fructosyl-glutamine to mannopine. This chain is Agropine synthesis reductase (mas1), found in Rhizobium rhizogenes (Agrobacterium rhizogenes).